The sequence spans 488 residues: Receptor-like tyrosine-protein kinase kin-15 (488 aa).

The N-terminal stretch at 1–26 is a signal peptide; the sequence is MCLKMRYERIKYILLFSLMHLVYSNS. A glycan (N-linked (GlcNAc...) asparagine) is linked at Asn25. Residues 27 to 50 are Extracellular-facing; sequence TFESFTENPHISSQISNVLYMDQM. The helical transmembrane segment at 51–70 threads the bilayer; the sequence is FIIYILICILLILISVIVYL. Over 71–488 the chain is Cytoplasmic; that stretch reads SKRYSQQMMQ…SKLEDWIRRD (418 aa). The 315-residue stretch at 144–458 folds into the Protein kinase domain; that stretch reads EISEDKLGSG…VEFFEEHLSV (315 aa). ATP is bound by residues 150–158 and Lys183; that span reads LGSGFFGEV. Asp319 serves as the catalytic Proton acceptor.

This sequence belongs to the protein kinase superfamily. Tyr protein kinase family. Hypodermal cells.

Its subcellular location is the cell membrane. It carries out the reaction L-tyrosyl-[protein] + ATP = O-phospho-L-tyrosyl-[protein] + ADP + H(+). Functionally, may be specifically involved in cell-cell interactions regulating cell fusions that generate the hypodermis during postembryonic development. It has a role in the development of the HYP7 hypodermal syncytium. This is Receptor-like tyrosine-protein kinase kin-15 (kin-15) from Caenorhabditis elegans.